The sequence spans 37 residues: Cytochrome b6-f complex subunit 7 (37 aa).

A helical transmembrane segment spans residues 11-29; sequence AILSIVLVLVGLAWGFLLL.

It belongs to the PetM family. The 4 large subunits of the cytochrome b6-f complex are cytochrome b6, subunit IV (17 kDa polypeptide, PetD), cytochrome f and the Rieske protein, while the 4 small subunits are PetG, PetL, PetM and PetN. The complex functions as a dimer.

Its subcellular location is the cellular thylakoid membrane. Component of the cytochrome b6-f complex, which mediates electron transfer between photosystem II (PSII) and photosystem I (PSI), cyclic electron flow around PSI, and state transitions. This Gloeothece citriformis (strain PCC 7424) (Cyanothece sp. (strain PCC 7424)) protein is Cytochrome b6-f complex subunit 7.